A 332-amino-acid polypeptide reads, in one-letter code: UPF0194 membrane protein YbhG (332 aa).

Residues Met1–Ala16 form the signal peptide. Positions Glu108–Ala209 form a coiled coil.

This sequence belongs to the UPF0194 family.

Its subcellular location is the periplasm. In Shigella dysenteriae serotype 1 (strain Sd197), this protein is UPF0194 membrane protein YbhG.